Consider the following 494-residue polypeptide: MTTVRTRIAPSPTGDPHVGTAYIALFNLCFARQHGGQFILRIEDTDQLRSTRESEQQIYDALRWLGIEWDEGPDVGGPHGPYRQSERGHIYKKYSDELVEKGHAFTCFCTPERLDAVRAEQMARKETPRYDGHCMHLPKDEVQRRLAAGESHVTRMKVPTEGVCVVPDMLRGDVEIPWDRMDMQVLMKADGLPTYFLANVVDDHLMGITHVLRGEEWLPSAPKLIKLYEYFGWEQPQLCYMPLLRNPDKSKLSKRKNPTSITFYERMGYLPQALLNYLGRMGWSMPDEREKFTLAEMIEHFDLSRVSLGGPIFDLEKLSWLNGQWIREQSVEEFAREVQKWALNPEYLMKIAPHVQGRVENFSQIAPLAGFFFSGGVPLDASLFEHKKLDPTQVRQVLQLVLWKLESLRQWEKERITGCIQAVAEHLQLKLRDVMPLMFPAITGHASSVSVLDAMEILGADLSRYRLRQALELLGGASKKETKEWEKIRDAIPG.

A 'HIGH' region motif is present at residues 10 to 20; the sequence is PSPTGDPHVGT. Residues Cys-107, Cys-109, Cys-134, and His-136 each coordinate Zn(2+). The 'KMSKS' region signature appears at 251–255; it reads KLSKR. ATP is bound at residue Lys-254.

The protein belongs to the class-I aminoacyl-tRNA synthetase family. Glutamate--tRNA ligase type 1 subfamily. In terms of assembly, monomer. Requires Zn(2+) as cofactor.

It is found in the cytoplasm. It carries out the reaction tRNA(Glu) + L-glutamate + ATP = L-glutamyl-tRNA(Glu) + AMP + diphosphate. Its function is as follows. Catalyzes the attachment of glutamate to tRNA(Glu) in a two-step reaction: glutamate is first activated by ATP to form Glu-AMP and then transferred to the acceptor end of tRNA(Glu). This Pseudomonas aeruginosa (strain ATCC 15692 / DSM 22644 / CIP 104116 / JCM 14847 / LMG 12228 / 1C / PRS 101 / PAO1) protein is Glutamate--tRNA ligase.